The sequence spans 1025 residues: MESFTNDRLQLPRNMIENSMFEEEPDVVDLAKEPCLHPLEPDEVEYEPRGSRLLVRGLGEHEMDEDEEDYESSAKLLGMSFMNRSSGLRNSAAGYRQSPDGTCSLPSARTLVICVFVIVVAVSVIMVIYLLPRCTFTKEGCHKTNQSAELIQPVATNGKVFPWAQIRLPTAIIPLCYELSLHPNLTSMTFRGSVTISLQALQDTRDIILHSTGHNISRVTFMSAVSSQEKQVEILEYPYHEQIAVVAPEPLLTGHNYTLKIEYSANISNSYYGFYGITYTDKSNEKKYFAATQFEPLAARSAFPCFDEPAFKATFIIKITRNEHHTALSNMPKKSSVPAEEGLIQDEFSESVKMSTYLVAFIVGEMRNLSQDVNGTLVSVYAVPEKIGQVHHALDTTIKLLEFYQTYFEIQYPLKKLDLVAIPDFEAGAMENWGLLTFREETLLYDNATSSVADRKLVTKIIAHELAHQWFGNLVTMQWWNDLWLNEGFATFMEYFSVEKIFKELNSYEDFLDARFKTMRKDSLNSSHPISSSVQSSEQIEEMFDSLSYFKGASLLLMLKSYLSEDVFRHAVILYLHNHSYAAIQSDDLWDSFNEVTDKTLDVKKMMKTWTLQKGFPLVTVQRKGTELLLQQERFFLRMQPESQPSDTSHLWHIPISYVTDGRNYSEYRSVSLLDKKSDVINLTEQVQWVKVNSNMTGYYIVHYAHDDWTALINQLKRNPYVLSDKDRANLINNIFELAGLGKVPLRMAFDLIDYLKNETHTAPITEALFQTNLIYNLLEKLGHMDLSSRLVARVHKLLQNQIQQQTWTDEGTPSMRELRSALLEFACAHSLENCTTMATNLFDSWMASNGTQSLPTDVMVTVFKVGARTEKGWLFLFSMYSSMGSEAEKNKILEALASSEDVHKLYWLMKSSLDGDIIRTQKLSLIIRTVGRHFPGHLLAWDFVKENWNKLVHKFHLGSYTIQSIVAGSTHLFSTKTHLSEVQAFFENQSEATLKLRCVQEALEVIQLNIQWMVRNLKTLSQWL.

The residue at position 1 (Met-1) is an N-acetylmethionine. Topologically, residues Met-1 to Arg-109 are cytoplasmic. The Dileucine internalization motif motif lies at Leu-53–Leu-54. Residue Tyr-70 is modified to Phosphotyrosine. The short motif at Leu-76–Leu-77 is the Dileucine internalization motif element. Phosphoserine is present on residues Ser-80 and Ser-91. The tract at residues Arg-96–Gly-101 is tankyrase binding. A helical; Signal-anchor for type II membrane protein membrane pass occupies residues Thr-110–Leu-131. Residues Pro-132–Leu-1025 are Extracellular-facing. 5 N-linked (GlcNAc...) asparagine glycosylation sites follow: Asn-145, Asn-184, Asn-215, Asn-256, and Asn-266. Glu-295 contributes to the substrate binding site. 2 N-linked (GlcNAc...) asparagine glycosylation sites follow: Asn-368 and Asn-374. Residue Gly-428 to Asn-432 coordinates substrate. The N-linked (GlcNAc...) asparagine glycan is linked to Asn-447. His-464 contributes to the Zn(2+) binding site. Residue Glu-465 is the Proton acceptor of the active site. Residues His-468 and Glu-487 each contribute to the Zn(2+) site. Asn-525, Asn-578, Asn-664, Asn-682, Asn-695, Asn-758, Asn-834, Asn-850, and Asn-989 each carry an N-linked (GlcNAc...) asparagine glycan.

It belongs to the peptidase M1 family. Homodimer. Binds tankyrases 1 and 2. Requires Zn(2+) as cofactor.

It localises to the cell membrane. The protein resides in the endomembrane system. The enzyme catalyses Release of an N-terminal amino acid, Cys-|-Xaa-, in which the half-cystine residue is involved in a disulfide loop, notably in oxytocin or vasopressin. Hydrolysis rates on a range of aminoacyl arylamides exceed that for the cystinyl derivative, however.. Its function is as follows. Release of an N-terminal amino acid, cleave before cysteine, leucine as well as other amino acids. Degrades peptide hormones such as oxytocin, vasopressin and angiotensin III, and plays a role in maintaining homeostasis during pregnancy. May be involved in the inactivation of neuronal peptides in the brain. Cleaves Met-enkephalin and dynorphin. Binds angiotensin IV and may be the angiotensin IV receptor in the brain. The protein is Leucyl-cystinyl aminopeptidase (Lnpep) of Mus musculus (Mouse).